The following is a 285-amino-acid chain: E2F-associated phosphoprotein (285 aa).

The residue at position 1 (Met-1) is an N-acetylmethionine. The interval 1 to 30 is disordered; that stretch reads MNRLPDDYDPYAVEEPSDEEPALSSSEDEV. The span at 15–30 shows a compositional bias: acidic residues; that stretch reads EPSDEEPALSSSEDEV. Ser-17 carries the phosphoserine modification. Thr-37 is subject to Phosphothreonine. The segment at 48 to 96 is disordered; the sequence is CLTGESESSSEDEFEKEMEAELNSTMKTMEDKLSSLGTGSSSGNGKVAT. The segment covering 55-67 has biased composition (acidic residues); the sequence is SSSEDEFEKEMEA. Residues 81-92 are compositionally biased toward low complexity; that stretch reads SSLGTGSSSGNG. A phosphoserine mark is found at Ser-109 and Ser-111. A disordered region spans residues 118-144; the sequence is VQVTKKKKKKQHKIPTNDELLYDPEKD. Residues 121 to 130 are compositionally biased toward basic residues; that stretch reads TKKKKKKQHK.

In terms of assembly, interacts with E2F1. The C-terminal half binds the N-terminal of E2F1. Also interacts with E2F2 and E2F3, but not E2F4. In terms of tissue distribution, ubiquitously expressed. Highest levels in heart, placenta, skeletal muscle and pancreas. Lower levels in brain, lung and kidney. In the brain, expressed in all regions with high levels in the cerebellum and cerebral cortex. Expressed in COS1 and transformed skin fibroblasts.

The protein localises to the cytoplasm. Its subcellular location is the nucleus. Its function is as follows. May play an important role in the fine-tuning of both major E2F1 activities, the regulation of the cell-cycle and the induction of apoptosis. Promotes S-phase entry, and inhibits p14(ARP) expression. In Homo sapiens (Human), this protein is E2F-associated phosphoprotein (EAPP).